The sequence spans 555 residues: Glutamine--tRNA ligase (555 aa).

Positions 34-44 (PEPNGYLHIGH) match the 'HIGH' region motif. ATP contacts are provided by residues 35–37 (EPN) and 41–47 (HIGHAKS). Residues aspartate 67 and tyrosine 212 each contribute to the L-glutamine site. ATP is bound by residues threonine 231, 261-262 (RL), and 269-271 (MSK). The 'KMSKS' region signature appears at 268–272 (VMSKR).

Belongs to the class-I aminoacyl-tRNA synthetase family. As to quaternary structure, monomer.

The protein resides in the cytoplasm. The enzyme catalyses tRNA(Gln) + L-glutamine + ATP = L-glutaminyl-tRNA(Gln) + AMP + diphosphate. This is Glutamine--tRNA ligase from Cronobacter sakazakii (strain ATCC BAA-894) (Enterobacter sakazakii).